The primary structure comprises 486 residues: Putative ankyrin repeat protein R634 (486 aa).

ANK repeat units lie at residues aspartate 84–glutamate 113, histidine 114–alanine 143, lysine 145–glutamate 173, asparagine 174–serine 203, serine 205–tryptophan 233, arginine 234–isoleucine 263, aspartate 265–phenylalanine 293, asparagine 307–lysine 336, glutamate 337–lysine 366, lysine 367–threonine 396, glutamate 398–serine 426, and tyrosine 427–aspartate 456.

The sequence is that of Putative ankyrin repeat protein R634 from Acanthamoeba polyphaga (Amoeba).